A 445-amino-acid polypeptide reads, in one-letter code: Argininosuccinate synthase (445 aa).

Residues 17 to 25 (AFSGGLDTS) and Ala-43 contribute to the ATP site. Tyr-99 contributes to the L-citrulline binding site. ATP contacts are provided by Gly-129 and Thr-131. L-aspartate is bound by residues Thr-131, Asn-135, and Asp-136. Position 135 (Asn-135) interacts with L-citrulline. An ATP-binding site is contributed by Asp-136. L-citrulline is bound by residues Arg-139 and Ser-192. ATP is bound at residue Asp-194. Positions 201, 203, and 280 each coordinate L-citrulline.

This sequence belongs to the argininosuccinate synthase family. Type 2 subfamily. In terms of assembly, homotetramer.

Its subcellular location is the cytoplasm. It catalyses the reaction L-citrulline + L-aspartate + ATP = 2-(N(omega)-L-arginino)succinate + AMP + diphosphate + H(+). It participates in amino-acid biosynthesis; L-arginine biosynthesis; L-arginine from L-ornithine and carbamoyl phosphate: step 2/3. This is Argininosuccinate synthase from Bradyrhizobium sp. (strain BTAi1 / ATCC BAA-1182).